The following is a 377-amino-acid chain: Chaperone protein DnaJ (377 aa).

In terms of domain architecture, J spans 5–70; the sequence is DYYEILGVAK…QKRAAYDQFG (66 aa). A CR-type zinc finger spans residues 130 to 208; sequence GTEVKIRVPS…CHGQGRVEEH (79 aa). Zn(2+) is bound by residues Cys-143, Cys-146, Cys-160, Cys-163, Cys-182, Cys-185, Cys-196, and Cys-199. CXXCXGXG motif repeat units follow at residues 143 to 150, 160 to 167, 182 to 189, and 196 to 203; these read CGECHGSG, CGTCGGVG, CPRCHGTG, and CKACHGQG.

It belongs to the DnaJ family. In terms of assembly, homodimer. It depends on Zn(2+) as a cofactor.

The protein resides in the cytoplasm. Functionally, participates actively in the response to hyperosmotic and heat shock by preventing the aggregation of stress-denatured proteins and by disaggregating proteins, also in an autonomous, DnaK-independent fashion. Unfolded proteins bind initially to DnaJ; upon interaction with the DnaJ-bound protein, DnaK hydrolyzes its bound ATP, resulting in the formation of a stable complex. GrpE releases ADP from DnaK; ATP binding to DnaK triggers the release of the substrate protein, thus completing the reaction cycle. Several rounds of ATP-dependent interactions between DnaJ, DnaK and GrpE are required for fully efficient folding. Also involved, together with DnaK and GrpE, in the DNA replication of plasmids through activation of initiation proteins. The polypeptide is Chaperone protein DnaJ (Thioalkalivibrio sulfidiphilus (strain HL-EbGR7)).